Reading from the N-terminus, the 167-residue chain is Ribosome maturation factor RimM (167 aa).

The PRC barrel domain occupies 94 to 165; the sequence is ENEYYYSDII…TIRITPMEGL (72 aa).

It belongs to the RimM family. As to quaternary structure, binds ribosomal protein uS19.

It localises to the cytoplasm. An accessory protein needed during the final step in the assembly of 30S ribosomal subunit, possibly for assembly of the head region. Essential for efficient processing of 16S rRNA. May be needed both before and after RbfA during the maturation of 16S rRNA. It has affinity for free ribosomal 30S subunits but not for 70S ribosomes. This Staphylococcus haemolyticus (strain JCSC1435) protein is Ribosome maturation factor RimM.